The chain runs to 601 residues: CDPK-related kinase 5 (601 aa).

Residues 1-19 are compositionally biased toward polar residues; it reads MGLCTSKPNSSNSDQTPAR. Disordered stretches follow at residues 1-55 and 70-98; these read MGLC…KSPF and KKTPARSPATNSTNSTPKRFFKRPFPPPS. G2 carries N-myristoyl glycine lipidation. The segment covering 26–35 has biased composition (low complexity); the sequence is SESVKPSSSS. Positions 36 to 48 are enriched in polar residues; sequence VNGEDQCVTTTNN. The Protein kinase domain occupies 148–410; that stretch reads YELGDEVGRG…AAQALSHPWI (263 aa). ATP is bound by residues 154-162 and K180; that span reads VGRGHFGYT. D276 (proton acceptor) is an active-site residue. S316 is subject to Phosphoserine. Residues 415-445 are autoinhibitory domain; the sequence is DAKVPMDILVFKLMRAYLRSSSLRKAALRAL. Residues 434-454 form a calmodulin binding (CaMBD) region; that stretch reads SSSLRKAALRALSKTLTVDEL. 4 EF-hand domains span residues 452-488, 489-524, 525-564, and 567-596; these read DELFYLREQFALLEPSKNGTISLENIKSALMKMATDA, MKDSRIPEFLGQLSALQYRRMDFEEFCAAALSVHQL, EALDRWEQHARCAYELFEKEGNRPIMIDELASELGLGPSV, and HAVLHDWLRHTDGKLSFLGFVKLLHGVSSR. Ca(2+) is bound by residues S467, N469, T471, N476, R508, E513, N546, E553, D578, and K580. Residue S582 is modified to Phosphoserine.

This sequence belongs to the protein kinase superfamily. Ser/Thr protein kinase family. CDPK subfamily. Binds calmodulin (CaM) in a calcium-dependent manner.

The protein resides in the membrane. It catalyses the reaction L-seryl-[protein] + ATP = O-phospho-L-seryl-[protein] + ADP + H(+). The enzyme catalyses L-threonyl-[protein] + ATP = O-phospho-L-threonyl-[protein] + ADP + H(+). With respect to regulation, activated by calcium and calmodulin. Autophosphorylation may play an important role in the regulation of the kinase activity. Functionally, may play a role in signal transduction pathways that involve calcium as a second messenger. The chain is CDPK-related kinase 5 (CRK5) from Arabidopsis thaliana (Mouse-ear cress).